Here is a 252-residue protein sequence, read N- to C-terminus: Probable transcriptional regulatory protein DSY2470 (252 aa).

This sequence belongs to the TACO1 family.

It localises to the cytoplasm. The chain is Probable transcriptional regulatory protein DSY2470 from Desulfitobacterium hafniense (strain Y51).